Here is a 281-residue protein sequence, read N- to C-terminus: Aquaporin-9 (281 aa).

Residues 1-17 lie on the Cytoplasmic side of the membrane; sequence MGAFVNTKVYIENKNIR. The chain crosses the membrane as a helical span at residues 18–36; that stretch reads DWLSEALSMFMYMSLLLGS. Topologically, residues 37–50 are extracellular; it reads AATGHFSGREDDAL. The chain crosses the membrane as a helical span at residues 51–69; the sequence is FGVIFQGFSITFGIYIGGA. Over 70–71 the chain is Cytoplasmic; sequence MS. The segment at residues 72-84 is an intramembrane region (discontinuously helical); it reads GAIINPALTLAVA. An NPA 1 motif is present at residues 76–78; the sequence is NPA. Topologically, residues 85 to 90 are cytoplasmic; sequence LLGKIS. Residues 91-115 traverse the membrane as a helical segment; it reads WRKCIVLQSAQYIGSFIASAVVYLI. The Extracellular segment spans residues 116–157; the sequence is YNDSLDAFGAGANFTATEPGVFRKDVAGIWSTFPKTYLKERG. N-linked (GlcNAc...) asparagine glycosylation is found at asparagine 117 and asparagine 128. Residues 158–175 traverse the membrane as a helical segment; that stretch reads AIFNQIFCSMLLTFGFLA. At 176-187 the chain is on the cytoplasmic side; that stretch reads ISDYKNFRPSKG. Residues 188 to 204 traverse the membrane as a helical segment; it reads LFPIAVGLLVMTVFLAF. At 205–207 the chain is on the extracellular side; the sequence is SYS. An intramembrane region (discontinuously helical) is located at residues 208–222; that stretch reads TGAAMNPARDFSPRL. The NPA 2 signature appears at 213-215; it reads NPA. Topologically, residues 223 to 241 are extracellular; that stretch reads WSLIIGYGIEVFSYNQYEW. A helical transmembrane segment spans residues 242–262; the sequence is FWIPWLMPYVGAMLGALIYQL. Over 263-281 the chain is Cytoplasmic; the sequence is LIGAQWSKGQKGESKHKDP.

The protein belongs to the MIP/aquaporin (TC 1.A.8) family.

Its subcellular location is the cell membrane. The catalysed reaction is H2O(in) = H2O(out). Functionally, aquaglyceroporin that may modulate the water content and osmolytes during anhydrobiosis. This is Aquaporin-9 from Milnesium tardigradum (Water bear).